A 558-amino-acid chain; its full sequence is Urocanate hydratase (558 aa).

NAD(+) is bound by residues 53-54 (GG), Gln131, 177-179 (GMG), Glu197, Arg202, 243-244 (NA), 264-268 (QTSAH), 274-275 (YL), and Tyr323. Cys411 is a catalytic residue. Gly493 provides a ligand contact to NAD(+).

The protein belongs to the urocanase family. It depends on NAD(+) as a cofactor.

It localises to the cytoplasm. The catalysed reaction is 4-imidazolone-5-propanoate = trans-urocanate + H2O. It functions in the pathway amino-acid degradation; L-histidine degradation into L-glutamate; N-formimidoyl-L-glutamate from L-histidine: step 2/3. Functionally, catalyzes the conversion of urocanate to 4-imidazolone-5-propionate. In Idiomarina loihiensis (strain ATCC BAA-735 / DSM 15497 / L2-TR), this protein is Urocanate hydratase.